Consider the following 266-residue polypeptide: Small ribosomal subunit protein uS2 (266 aa).

The segment at 227 to 266 (GVSFTEETPSEPIQSDSSEEEEGSLDISDLFEDTDLKEEE) is disordered. Residues 231-240 (TEETPSEPIQ) are compositionally biased toward polar residues. A compositionally biased stretch (acidic residues) spans 243–266 (SSEEEEGSLDISDLFEDTDLKEEE).

It belongs to the universal ribosomal protein uS2 family.

This is Small ribosomal subunit protein uS2 from Pseudothermotoga lettingae (strain ATCC BAA-301 / DSM 14385 / NBRC 107922 / TMO) (Thermotoga lettingae).